The following is a 273-amino-acid chain: HTH-type transcriptional activator RhaS (273 aa).

One can recognise an HTH araC/xylS-type domain in the interval 174-272; the sequence is YQLLDWLQNN…SQSPRDLRSQ (99 aa). 2 consecutive DNA-binding regions (H-T-H motif) follow at residues 191–212 and 239–262; these read PELADRFALPLRTLHRQLKNKT and VTDIAYLCGFGDSNHFSTLFKREF.

Binds DNA as a dimer.

It localises to the cytoplasm. In terms of biological role, activates expression of the rhaBAD and rhaT operons. This is HTH-type transcriptional activator RhaS from Yersinia pseudotuberculosis serotype I (strain IP32953).